The primary structure comprises 244 residues: Probable ABC transporter ATP-binding protein in ycf23-apcF intergenic region (244 aa).

The ABC transporter domain maps to 9–241 (LEINNLTVSY…KLSTLFGEHI (233 aa)). Residue 41–48 (GPNGAGKS) participates in ATP binding.

The protein belongs to the ABC transporter superfamily.

It localises to the plastid. It is found in the cyanelle. The protein is Probable ABC transporter ATP-binding protein in ycf23-apcF intergenic region of Cyanophora paradoxa.